A 166-amino-acid polypeptide reads, in one-letter code: Deglycase PYRAB04690 (166 aa).

The PfpI endopeptidase domain occupies 1–166; that stretch reads MRVLILSADQ…WMREFVKLLK (166 aa). H101 is an active-site residue.

It belongs to the peptidase C56 family. As to quaternary structure, homohexamer formed by a dimer of trimers that assemble into a hollow ring structure.

The protein resides in the cytoplasm. The enzyme catalyses N(omega)-(1-hydroxy-2-oxopropyl)-L-arginyl-[protein] + H2O = lactate + L-arginyl-[protein] + H(+). It carries out the reaction N(6)-(1-hydroxy-2-oxopropyl)-L-lysyl-[protein] + H2O = lactate + L-lysyl-[protein] + H(+). The catalysed reaction is S-(1-hydroxy-2-oxopropyl)-L-cysteinyl-[protein] + H2O = lactate + L-cysteinyl-[protein] + H(+). It catalyses the reaction N(omega)-(1-hydroxy-2-oxoethyl)-L-arginyl-[protein] + H2O = L-arginyl-[protein] + glycolate + H(+). The enzyme catalyses N(6)-(1-hydroxy-2-oxoethyl)-L-lysyl-[protein] + H2O = glycolate + L-lysyl-[protein] + H(+). It carries out the reaction S-(1-hydroxy-2-oxoethyl)-L-cysteinyl-[protein] + H2O = glycolate + L-cysteinyl-[protein] + H(+). Deglycase that catalyzes the deglycation of the Maillard adducts formed between amino groups of proteins and reactive carbonyl groups of glyoxals. Thus, functions as a protein deglycase that repairs methylglyoxal- and glyoxal-glycated proteins, and releases repaired proteins and lactate or glycolate, respectively. Deglycates cysteine, arginine and lysine residues in proteins, and thus reactivates these proteins by reversing glycation by glyoxals. Acts on early glycation intermediates (hemithioacetals and aminocarbinols), preventing the formation of advanced glycation endproducts (AGE) that cause irreversible damage. Also displays proteolytic activity. The chain is Deglycase PYRAB04690 from Pyrococcus abyssi (strain GE5 / Orsay).